The chain runs to 304 residues: Sulfate adenylyltransferase subunit 2 2 (304 aa).

The protein belongs to the PAPS reductase family. CysD subfamily. Heterodimer composed of CysD, the smaller subunit, and CysN.

It carries out the reaction sulfate + ATP + H(+) = adenosine 5'-phosphosulfate + diphosphate. Its pathway is sulfur metabolism; hydrogen sulfide biosynthesis; sulfite from sulfate: step 1/3. With CysN forms the ATP sulfurylase (ATPS) that catalyzes the adenylation of sulfate producing adenosine 5'-phosphosulfate (APS) and diphosphate, the first enzymatic step in sulfur assimilation pathway. APS synthesis involves the formation of a high-energy phosphoric-sulfuric acid anhydride bond driven by GTP hydrolysis by CysN coupled to ATP hydrolysis by CysD. This is Sulfate adenylyltransferase subunit 2 2 from Marinobacter nauticus (strain ATCC 700491 / DSM 11845 / VT8) (Marinobacter aquaeolei).